A 453-amino-acid chain; its full sequence is UDP-N-acetylmuramoylalanine--D-glutamate ligase (453 aa).

ATP is bound at residue 117–123; it reads GANGKST.

This sequence belongs to the MurCDEF family.

Its subcellular location is the cytoplasm. It catalyses the reaction UDP-N-acetyl-alpha-D-muramoyl-L-alanine + D-glutamate + ATP = UDP-N-acetyl-alpha-D-muramoyl-L-alanyl-D-glutamate + ADP + phosphate + H(+). It functions in the pathway cell wall biogenesis; peptidoglycan biosynthesis. Cell wall formation. Catalyzes the addition of glutamate to the nucleotide precursor UDP-N-acetylmuramoyl-L-alanine (UMA). The chain is UDP-N-acetylmuramoylalanine--D-glutamate ligase from Methylobacillus flagellatus (strain ATCC 51484 / DSM 6875 / VKM B-1610 / KT).